Here is a 725-residue protein sequence, read N- to C-terminus: N-alpha-acetyltransferase 35, NatC auxiliary subunit (725 aa).

The interval 548-573 (ERIMEEQQKGRSSKKTKKKKKVRPLS) is disordered. Over residues 558–571 (RSSKKTKKKKKVRP) the composition is skewed to basic residues.

It belongs to the MAK10 family. In terms of assembly, component of the N-terminal acetyltransferase C (NatC) complex, which is composed of NAA35, NAA38 and NAA30. Expressed in primary spermatocytes, basal epidermis, interstitial fibroblasts of skeletal muscle, and intestinal crypts.

It is found in the cytoplasm. Functionally, auxillary component of the N-terminal acetyltransferase C (NatC) complex which catalyzes acetylation of N-terminal methionine residues. N-terminal acetylation protects proteins from ubiquitination and degradation by the N-end rule pathway. Involved in regulation of apoptosis and proliferation of smooth muscle cells. In Rattus norvegicus (Rat), this protein is N-alpha-acetyltransferase 35, NatC auxiliary subunit (Naa35).